The primary structure comprises 395 residues: Elongation factor Tu (395 aa).

The 195-residue stretch at K10–Q204 folds into the tr-type G domain. A G1 region spans residues G19–T26. G19–T26 contributes to the GTP binding site. T26 provides a ligand contact to Mg(2+). Positions G60–S64 are G2. The interval D81 to G84 is G3. GTP contacts are provided by residues D81–H85 and N136–D139. Residues N136–D139 form a G4 region. A G5 region spans residues S174–L176.

The protein belongs to the TRAFAC class translation factor GTPase superfamily. Classic translation factor GTPase family. EF-Tu/EF-1A subfamily. In terms of assembly, monomer.

It is found in the cytoplasm. It catalyses the reaction GTP + H2O = GDP + phosphate + H(+). In terms of biological role, GTP hydrolase that promotes the GTP-dependent binding of aminoacyl-tRNA to the A-site of ribosomes during protein biosynthesis. The polypeptide is Elongation factor Tu (Geobacillus kaustophilus (strain HTA426)).